A 313-amino-acid polypeptide reads, in one-letter code: Phenylalanine-4-hydroxylase (313 aa).

Fe cation-binding residues include histidine 154, histidine 159, and glutamate 200.

This sequence belongs to the biopterin-dependent aromatic amino acid hydroxylase family. Fe(2+) serves as cofactor.

It carries out the reaction (6R)-L-erythro-5,6,7,8-tetrahydrobiopterin + L-phenylalanine + O2 = (4aS,6R)-4a-hydroxy-L-erythro-5,6,7,8-tetrahydrobiopterin + L-tyrosine. The protein operates within amino-acid degradation; L-phenylalanine degradation; acetoacetate and fumarate from L-phenylalanine: step 1/6. The sequence is that of Phenylalanine-4-hydroxylase (phhA) from Ralstonia nicotianae (strain ATCC BAA-1114 / GMI1000) (Ralstonia solanacearum).